The following is a 293-amino-acid chain: Bifunctional protein FolD (293 aa).

NADP(+)-binding positions include 165 to 167 (GRS), Ser-190, and Ile-231.

It belongs to the tetrahydrofolate dehydrogenase/cyclohydrolase family. In terms of assembly, homodimer.

The catalysed reaction is (6R)-5,10-methylene-5,6,7,8-tetrahydrofolate + NADP(+) = (6R)-5,10-methenyltetrahydrofolate + NADPH. It catalyses the reaction (6R)-5,10-methenyltetrahydrofolate + H2O = (6R)-10-formyltetrahydrofolate + H(+). Its pathway is one-carbon metabolism; tetrahydrofolate interconversion. In terms of biological role, catalyzes the oxidation of 5,10-methylenetetrahydrofolate to 5,10-methenyltetrahydrofolate and then the hydrolysis of 5,10-methenyltetrahydrofolate to 10-formyltetrahydrofolate. The chain is Bifunctional protein FolD from Parasynechococcus marenigrum (strain WH8102).